The following is a 236-amino-acid chain: LexA repressor (236 aa).

The segment at residues 26-46 (FDEMKDALDLRSKSGIHRLIT) is a DNA-binding region (H-T-H motif). Residues 85-109 (PSVIEGNLGKVRPPSPTPAEDDHDR) are disordered. Catalysis depends on for autocatalytic cleavage activity residues Ser-157 and Lys-195.

The protein belongs to the peptidase S24 family. In terms of assembly, homodimer.

It carries out the reaction Hydrolysis of Ala-|-Gly bond in repressor LexA.. Functionally, represses a number of genes involved in the response to DNA damage (SOS response), including recA and lexA. In the presence of single-stranded DNA, RecA interacts with LexA causing an autocatalytic cleavage which disrupts the DNA-binding part of LexA, leading to derepression of the SOS regulon and eventually DNA repair. The chain is LexA repressor from Rhodopseudomonas palustris (strain ATCC BAA-98 / CGA009).